The following is a 149-amino-acid chain: D-aminoacyl-tRNA deacylase (149 aa).

A Gly-cisPro motif, important for rejection of L-amino acids motif is present at residues Gly137–Pro138.

Belongs to the DTD family. As to quaternary structure, homodimer.

It is found in the cytoplasm. The catalysed reaction is glycyl-tRNA(Ala) + H2O = tRNA(Ala) + glycine + H(+). It carries out the reaction a D-aminoacyl-tRNA + H2O = a tRNA + a D-alpha-amino acid + H(+). An aminoacyl-tRNA editing enzyme that deacylates mischarged D-aminoacyl-tRNAs. Also deacylates mischarged glycyl-tRNA(Ala), protecting cells against glycine mischarging by AlaRS. Acts via tRNA-based rather than protein-based catalysis; rejects L-amino acids rather than detecting D-amino acids in the active site. By recycling D-aminoacyl-tRNA to D-amino acids and free tRNA molecules, this enzyme counteracts the toxicity associated with the formation of D-aminoacyl-tRNA entities in vivo and helps enforce protein L-homochirality. The chain is D-aminoacyl-tRNA deacylase from Clostridium beijerinckii (strain ATCC 51743 / NCIMB 8052) (Clostridium acetobutylicum).